We begin with the raw amino-acid sequence, 107 residues long: MFLDYFALGVLIFVFLVIFYGIIILHDIPYLIAKKRNHPHADAIHVAGWVSLFTLHVIWPFLWIWATLYRPERGWGMQSHDSSVMQLQQRIAGLEKQLADIKSSSAE.

The Cytoplasmic portion of the chain corresponds to 1 to 6 (MFLDYF). Residues 7–29 (ALGVLIFVFLVIFYGIIILHDIP) form a helical membrane-spanning segment. Topologically, residues 30 to 43 (YLIAKKRNHPHADA) are periplasmic. The helical transmembrane segment at 44–66 (IHVAGWVSLFTLHVIWPFLWIWA) threads the bilayer. The Cytoplasmic segment spans residues 67 to 107 (TLYRPERGWGMQSHDSSVMQLQQRIAGLEKQLADIKSSSAE).

This sequence to E.coli YibI.

Its subcellular location is the cell inner membrane. This chain is Inner membrane protein YiaW (yiaW), found in Escherichia coli O157:H7.